Here is a 270-residue protein sequence, read N- to C-terminus: Myeloid leukemia factor 1 (270 aa).

4 positions are modified to phosphoserine: S6, S8, S32, and S34. An interaction with COPS3 region spans residues 50-125; it reads RARNRMGHED…VGDEPPKVFQ (76 aa). Disordered stretches follow at residues 127 to 148 and 221 to 247; these read STQT…RDSD and RSVA…AIEH. The span at 138 to 148 shows a compositional bias: basic and acidic residues; it reads KETRKALRDSD.

This sequence belongs to the MLF family. Interacts with CENPU. Also interacts with NRBP1/MADM, YWHAZ/14-3-3-zeta and HNRPUL2/MANP. NRBP1 recruits a serine kinase which phosphorylates both itself and MLF1. Phosphorylated MLF1 then binds to YWHAZ and is retained in the cytoplasm. Retained in the nucleus by binding to HNRPUL2. Binds to COPS3/CSN3 which is required for suppression of COP1 and activation of p53. In terms of processing, phosphorylation is required for binding to YWHAZ.

Its subcellular location is the cytoplasm. It is found in the nucleus. It localises to the cell projection. The protein resides in the cilium. The protein localises to the cytoskeleton. Its subcellular location is the cilium basal body. Involved in lineage commitment of primary hemopoietic progenitors by restricting erythroid formation and enhancing myeloid formation. Interferes with erythropoietin-induced erythroid terminal differentiation by preventing cells from exiting the cell cycle through suppression of CDKN1B/p27Kip1 levels. Suppresses COP1 activity via CSN3 which activates p53 and induces cell cycle arrest. Binds DNA and affects the expression of a number of genes so may function as a transcription factor in the nucleus. This is Myeloid leukemia factor 1 (MLF1) from Bos taurus (Bovine).